The sequence spans 544 residues: Chaperonin GroEL (544 aa).

ATP is bound by residues 30–33 (TLGP), K51, 87–91 (DGTTT), G415, 481–483 (DAL), and D497.

Belongs to the chaperonin (HSP60) family. In terms of assembly, forms a cylinder of 14 subunits composed of two heptameric rings stacked back-to-back. Interacts with the co-chaperonin GroES.

The protein resides in the cytoplasm. It catalyses the reaction ATP + H2O + a folded polypeptide = ADP + phosphate + an unfolded polypeptide.. In terms of biological role, together with its co-chaperonin GroES, plays an essential role in assisting protein folding. The GroEL-GroES system forms a nano-cage that allows encapsulation of the non-native substrate proteins and provides a physical environment optimized to promote and accelerate protein folding. The polypeptide is Chaperonin GroEL (Chlamydia trachomatis serovar A (strain ATCC VR-571B / DSM 19440 / HAR-13)).